Here is a 194-residue protein sequence, read N- to C-terminus: AP-3 complex subunit sigma (194 aa).

It belongs to the adaptor complexes small subunit family. Adaptor protein complex 3 (AP-3) is a heterotetramer composed of 2 large adaptins (APL5 and APL6), a medium adaptin (APM3) and a small adaptin (APS3).

It is found in the golgi apparatus. It localises to the cytoplasmic vesicle membrane. Functionally, part of the AP-3 complex, an adaptor-related complex which is not clathrin-associated. The complex is associated with the Golgi region as well as more peripheral structures. It facilitates the budding of vesicles from the Golgi membrane and may be directly involved in trafficking to the vacuole. Required for the transport via the ALP pathway, which directs the transport of the cargo proteins PHO8 and VAM3 to the vacuole. The polypeptide is AP-3 complex subunit sigma (APS3) (Saccharomyces cerevisiae (strain ATCC 204508 / S288c) (Baker's yeast)).